The sequence spans 160 residues: Nucleotide-binding protein MADE_1020535 (160 aa).

It belongs to the YajQ family.

Its function is as follows. Nucleotide-binding protein. This Alteromonas mediterranea (strain DSM 17117 / CIP 110805 / LMG 28347 / Deep ecotype) protein is Nucleotide-binding protein MADE_1020535.